Reading from the N-terminus, the 325-residue chain is Elongation factor P--(R)-beta-lysine ligase (325 aa).

76–78 (SPE) serves as a coordination point for substrate. ATP-binding positions include 100–102 (RNE) and Asn109. A substrate-binding site is contributed by Tyr118. Residue 244–245 (EL) participates in ATP binding. Glu251 serves as a coordination point for substrate. Position 300 (Gly300) interacts with ATP.

This sequence belongs to the class-II aminoacyl-tRNA synthetase family. EpmA subfamily. Homodimer.

The catalysed reaction is D-beta-lysine + L-lysyl-[protein] + ATP = N(6)-((3R)-3,6-diaminohexanoyl)-L-lysyl-[protein] + AMP + diphosphate + H(+). Its function is as follows. With EpmB is involved in the beta-lysylation step of the post-translational modification of translation elongation factor P (EF-P). Catalyzes the ATP-dependent activation of (R)-beta-lysine produced by EpmB, forming a lysyl-adenylate, from which the beta-lysyl moiety is then transferred to the epsilon-amino group of a conserved specific lysine residue in EF-P. The polypeptide is Elongation factor P--(R)-beta-lysine ligase (Hamiltonella defensa subsp. Acyrthosiphon pisum (strain 5AT)).